Reading from the N-terminus, the 278-residue chain is Large ribosomal subunit protein uL2 (278 aa).

Positions 222 to 264 are disordered; the sequence is GVAMNPIDHPHGGGEGRTSGGRHPVTPWGKPTKGRKTRKNKAT.

It belongs to the universal ribosomal protein uL2 family. Part of the 50S ribosomal subunit. Forms a bridge to the 30S subunit in the 70S ribosome.

One of the primary rRNA binding proteins. Required for association of the 30S and 50S subunits to form the 70S ribosome, for tRNA binding and peptide bond formation. It has been suggested to have peptidyltransferase activity; this is somewhat controversial. Makes several contacts with the 16S rRNA in the 70S ribosome. The protein is Large ribosomal subunit protein uL2 of Phenylobacterium zucineum (strain HLK1).